Reading from the N-terminus, the 953-residue chain is Glutamate receptor 3.5 (953 aa).

Residues 1 to 29 (MGFFVMIRDVSMGFMLLCISALWVLPIQG) form the signal peptide. Residues 30-606 (AGRESFSRNS…SPWSFLKPFT (577 aa)) lie on the Extracellular side of the membrane. N-linked (GlcNAc...) asparagine glycosylation is found at Asn38, Asn95, Asn223, Asn371, Asn397, Asn436, Asn454, and Asn569. A helical membrane pass occupies residues 607–627 (IEMWAVTGALFLFVGAVIWIL). The Cytoplasmic segment spans residues 628-636 (EHRFNEEFR). Residues 637–657 (GPPRRQIITVFWFSFSTMFFS) form a helical membrane-spanning segment. Residues 658–668 (HRENTVSTLGR) are Cytoplasmic-facing. Residues 669–689 (FVLLVWLFVVLIINSSYTASL) traverse the membrane as a helical segment. The Extracellular portion of the chain corresponds to 690 to 850 (TSILTVQQLT…TENYQISVQS (161 aa)). The chain crosses the membrane as a helical span at residues 851-871 (FWGLFLICGVVWFIALTLFCW). At 872-953 (KVFWQYQRLR…SQSKDHETPQ (82 aa)) the chain is on the cytoplasmic side. Residues 928–953 (EKSSKKLKDGQSSAENSQSKDHETPQ) form a disordered region.

This sequence belongs to the glutamate-gated ion channel (TC 1.A.10.1) family. In terms of assembly, may form heteromers. In terms of tissue distribution, expressed predominantly in roots. Also detected in shoots.

Its subcellular location is the membrane. In terms of biological role, glutamate-gated receptor that probably acts as a non-selective cation channel. May be involved in light-signal transduction and calcium homeostasis via the regulation of calcium influx into cells. The polypeptide is Glutamate receptor 3.5 (GLR3.5) (Arabidopsis thaliana (Mouse-ear cress)).